The primary structure comprises 368 residues: Putative agmatine deiminase (368 aa).

The active-site Amidino-cysteine intermediate is C359.

Belongs to the agmatine deiminase family.

The catalysed reaction is agmatine + H2O = N-carbamoylputrescine + NH4(+). The polypeptide is Putative agmatine deiminase (Pectobacterium atrosepticum (strain SCRI 1043 / ATCC BAA-672) (Erwinia carotovora subsp. atroseptica)).